The following is a 222-amino-acid chain: Small ribosomal subunit protein uS3 (222 aa).

The KH type-2 domain occupies 39–107; the sequence is VREFLHKKLA…PVQINIEEVR (69 aa).

Belongs to the universal ribosomal protein uS3 family. As to quaternary structure, part of the 30S ribosomal subunit. Forms a tight complex with proteins S10 and S14.

Its function is as follows. Binds the lower part of the 30S subunit head. Binds mRNA in the 70S ribosome, positioning it for translation. This is Small ribosomal subunit protein uS3 from Francisella tularensis subsp. tularensis (strain FSC 198).